Here is a 297-residue protein sequence, read N- to C-terminus: Ectoine dioxygenase (297 aa).

Q131 lines the L-ectoine pocket. K137 is a binding site for 2-oxoglutarate. Positions 148, 150, and 249 each coordinate Fe cation.

It belongs to the PhyH family. EctD subfamily. Homodimer. It depends on Fe(2+) as a cofactor.

The enzyme catalyses L-ectoine + 2-oxoglutarate + O2 = 5-hydroxyectoine + succinate + CO2. Its function is as follows. Involved in the biosynthesis of 5-hydroxyectoine, called compatible solute, which helps organisms to survive extreme osmotic stress by acting as a highly soluble organic osmolyte. Catalyzes the 2-oxoglutarate-dependent selective hydroxylation of L-ectoine to yield (4S,5S)-5-hydroxyectoine. In Streptomyces anulatus (Streptomyces chrysomallus), this protein is Ectoine dioxygenase.